Reading from the N-terminus, the 228-residue chain is ATP-dependent dethiobiotin synthetase BioD 1 (228 aa).

13 to 18 (EVGKTV) lines the ATP pocket. Threonine 17 lines the Mg(2+) pocket. Residue lysine 38 is part of the active site. Position 42 (serine 42) interacts with substrate. Residues aspartate 55, 116–119 (EGAG), 176–177 (ND), and 205–207 (PWL) contribute to the ATP site. Positions 55 and 116 each coordinate Mg(2+).

It belongs to the dethiobiotin synthetase family. In terms of assembly, homodimer. Mg(2+) is required as a cofactor.

Its subcellular location is the cytoplasm. It catalyses the reaction (7R,8S)-7,8-diammoniononanoate + CO2 + ATP = (4R,5S)-dethiobiotin + ADP + phosphate + 3 H(+). It functions in the pathway cofactor biosynthesis; biotin biosynthesis; biotin from 7,8-diaminononanoate: step 1/2. Catalyzes a mechanistically unusual reaction, the ATP-dependent insertion of CO2 between the N7 and N8 nitrogen atoms of 7,8-diaminopelargonic acid (DAPA, also called 7,8-diammoniononanoate) to form a ureido ring. The protein is ATP-dependent dethiobiotin synthetase BioD 1 of Salmonella typhimurium (strain LT2 / SGSC1412 / ATCC 700720).